The sequence spans 177 residues: CASP-like protein 5A2 (177 aa).

Residues 1–36 are Cytoplasmic-facing; it reads MNASHPAVHPVGVPPAVAGQLPPRMRMKEIQGMPGT. A helical transmembrane segment spans residues 37–57; the sequence is IGGLLLRLGQFCFALVAFSIM. At 58–68 the chain is on the extracellular side; sequence VSIENFSTVTA. The N-linked (GlcNAc...) asparagine glycan is linked to asparagine 62. Residues 69 to 89 form a helical membrane-spanning segment; the sequence is FCYLVAATVLQCLWSLALAII. The Cytoplasmic segment spans residues 90–103; the sequence is DGYALLVKRSLRNS. The helical transmembrane segment at 104-124 threads the bilayer; sequence LLVSLLVVGDGVTATLTFAAA. At 125–153 the chain is on the extracellular side; sequence CASAGITVLIGNDLRQCKENHCARYETAT. The helical transmembrane segment at 154–174 threads the bilayer; it reads ALAFLSWFMVSLSFILTFWLL. Topologically, residues 175–177 are cytoplasmic; that stretch reads ATR.

It belongs to the Casparian strip membrane proteins (CASP) family. As to quaternary structure, homodimer and heterodimers.

The protein resides in the cell membrane. The protein is CASP-like protein 5A2 of Ginkgo biloba (Ginkgo).